We begin with the raw amino-acid sequence, 499 residues long: Na(+)/H(+) antiporter NhaB (499 aa).

Transmembrane regions (helical) follow at residues 33–53 (PVIFLISPYIAGWVLILEFIF), 66–86 (PGGLLAIEAVLIGMVSPHTVY), 89–109 (VSGNLEVILLLVFMVAGIYFM), 128–148 (AILSLLFSLVAAVLSAFLDAL), 237–257 (FIEFFVRMAPISIPVLIAGLI), 305–325 (AIVALILVVALALHLAEVGLI), 326–346 (GLTVIILATAFCGVIEEHQIG), 349–369 (FEEALPFTSLLVVFFAVVGVI), 393–413 (MFFIANGVLSMISDNVFVATV), 449–469 (ATPNGQAAFLFLLTSAIAPLI), and 477–497 (VWMALPYTLVMGGLGYVMIVI).

Belongs to the NhaB Na(+)/H(+) (TC 2.A.34) antiporter family.

It localises to the cell inner membrane. The catalysed reaction is 2 Na(+)(in) + 3 H(+)(out) = 2 Na(+)(out) + 3 H(+)(in). Functionally, na(+)/H(+) antiporter that extrudes sodium in exchange for external protons. This chain is Na(+)/H(+) antiporter NhaB, found in Hahella chejuensis (strain KCTC 2396).